Consider the following 312-residue polypeptide: Plasminogen activator (312 aa).

Residues 1-20 form the signal peptide; it reads MKKSSIVATIITILSGSANA. Residues 21–31 are Periplasmic-facing; the sequence is ASSQLIPNISP. Residues 32 to 40 traverse the membrane as a beta stranded segment; sequence DSFTVAAST. The Extracellular segment spans residues 41-70; that stretch reads GMLSGKSHEMLYDAETGRKISQLDWKIKNV. Residues 71-80 form a beta stranded membrane-spanning segment; the sequence is AILKGDISWD. Topologically, residues 81–84 are periplasmic; the sequence is PYSF. The chain crosses the membrane as a beta stranded span at residues 85 to 94; it reads LTLNARGWTS. At 95 to 131 the chain is on the extracellular side; it reads LASGSGNMDDYDWMNENQSEWTDHSSHPATNVNHANE. Catalysis depends on residues aspartate 104 and aspartate 106. The beta stranded transmembrane segment at 132–140 threads the bilayer; the sequence is YDLNVKGWL. Residues 141–145 lie on the Periplasmic side of the membrane; it reads LQDEN. The chain crosses the membrane as a beta stranded span at residues 146-154; that stretch reads YKAGITAGY. The Extracellular segment spans residues 155-194; that stretch reads QETRFSWTATGGSYSYNNGAYTGNFPKGVRVIGYNQRFSM. The beta stranded transmembrane segment at 195–204 threads the bilayer; sequence PYIGLAGQYR. Residues 205–207 lie on the Periplasmic side of the membrane; sequence IND. The chain crosses the membrane as a beta stranded span at residues 208–216; the sequence is FELNALFKF. Residues 217–244 are Extracellular-facing; it reads SDWVRAHDNDEHYMRDLTFREKTSGSRY. Catalysis depends on residues aspartate 226 and histidine 228. Residues 245–255 form a beta stranded membrane-spanning segment; the sequence is YGTVINAGYYV. Residues 256-258 are Periplasmic-facing; it reads TPN. Residues 259–267 form a beta stranded membrane-spanning segment; the sequence is AKVFAEFTY. Residues 268–301 are Extracellular-facing; that stretch reads SKYDEGKGGTQTIDKNSGDSVSIGGDAAGISNKN. The beta stranded transmembrane segment at 302-312 threads the bilayer; the sequence is YTVTAGLQYRF.

It belongs to the peptidase A26 family.

It localises to the cell outer membrane. The enzyme catalyses Converts human Glu-plasminogen to plasmin by cleaving the 560-Arg-|-Val-561 peptide bond that is also hydrolyzed by the mammalian u-plasminogen activator and t-plasminogen activator. Also cleaves arginyl bonds in other proteins.. Its activity is regulated as follows. Requires bacterial lipopolysaccharide (LPS) for activation; addition of LPS to inactive protein reactivates it. In the absence of LPS the active site groove is slightly narrower, and peptide substrate binds deep within the active site groove, displacing the nucleophilic water molecule. Functionally, in the mammalian host activates (cleaves) plasminogen to generate the serine protease plasmin. Plasmin degrades fibrin clots (fibrinolysis) and facilitates bacterial cell migration, enabling rapid dissemination of bacteria from the initial site of infection. Cleaves host plasminogen to generate plasmin and probably also has autocatalytic activity. Fibrinolytic activity prevails at 37 degrees Celsius whereas coagulase expression predominates at lower temperatures (28 degrees Celsius). Cleaves plasminogen; plasminogen cleavage is much higher than coagulase activity. In Yersinia pestis, this protein is Plasminogen activator.